Consider the following 277-residue polypeptide: Putative phosphoenolpyruvate synthase regulatory protein (277 aa).

Residue 157–164 (GVSRCGKT) participates in ADP binding.

The protein belongs to the pyruvate, phosphate/water dikinase regulatory protein family. PSRP subfamily.

The enzyme catalyses [pyruvate, water dikinase] + ADP = [pyruvate, water dikinase]-phosphate + AMP + H(+). It catalyses the reaction [pyruvate, water dikinase]-phosphate + phosphate + H(+) = [pyruvate, water dikinase] + diphosphate. In terms of biological role, bifunctional serine/threonine kinase and phosphorylase involved in the regulation of the phosphoenolpyruvate synthase (PEPS) by catalyzing its phosphorylation/dephosphorylation. This is Putative phosphoenolpyruvate synthase regulatory protein from Cronobacter sakazakii (strain ATCC BAA-894) (Enterobacter sakazakii).